We begin with the raw amino-acid sequence, 193 residues long: Thymidine kinase (193 aa).

Residues Gly-14–Thr-21 and Asp-87–His-90 contribute to the ATP site. Glu-88 functions as the Proton acceptor in the catalytic mechanism. Zn(2+) contacts are provided by Cys-147, Cys-150, Cys-185, and Cys-188.

Belongs to the thymidine kinase family. Homotetramer.

It localises to the cytoplasm. The catalysed reaction is thymidine + ATP = dTMP + ADP + H(+). In Roseiflexus sp. (strain RS-1), this protein is Thymidine kinase.